The primary structure comprises 162 residues: L-amino acid N-acetyltransferase AaaT (162 aa).

An N-acetyltransferase domain is found at 4–162; sequence IVIRHAETRD…VDAYYMARVK (159 aa).

The protein belongs to the acetyltransferase family.

It catalyses the reaction L-phenylalanine + acetyl-CoA = N-acetyl-L-phenylalanine + CoA + H(+). The catalysed reaction is L-methionine + acetyl-CoA = N-acetyl-L-methionine + CoA + H(+). Catalyzes the N-acetylation of L-phenylalanine and L-methionine using acetyl-CoA as acetyl donor in vitro. Cannot accept L-tyrosine as substrate and propionyl-CoA, succinyl-CoA or (S)-methylmalonyl-CoA as acyl donors. Is also able to acetylate and thus detoxify several nonhydrolyzable aminoacyl adenylates, but not the processed form of the peptide-nucleotide antibiotic microcin C (McC). When overproduced, provides complete resistance to leucyl sulfamoyl adenylate (LSA) and partial resistance to alanyl sulfamoyl adenylate (ASA) and phenylalanyl sulfamoyl adenylate (FSA). Therefore, may protect bacteria from various toxic aminoacyl nucleotides, either exogenous or those generated inside the cell during normal metabolism. The protein is L-amino acid N-acetyltransferase AaaT of Escherichia coli (strain K12).